Reading from the N-terminus, the 1060-residue chain is Carbamoyl phosphate synthase large chain (1060 aa).

Residues methionine 1–glutamate 401 are carboxyphosphate synthetic domain. Residues arginine 129, arginine 169, glycine 175, glycine 176, arginine 208, isoleucine 210, glutamate 215, glycine 241, valine 242, histidine 243, glutamine 284, and glutamate 298 each coordinate ATP. An ATP-grasp 1 domain is found at lysine 133 to valine 327. Positions 284, 298, and 300 each coordinate Mg(2+). Residues glutamine 284, glutamate 298, and asparagine 300 each contribute to the Mn(2+) site. The segment at valine 402–serine 546 is oligomerization domain. The carbamoyl phosphate synthetic domain stretch occupies residues valine 547–glycine 929. Positions aspartate 671–leucine 861 constitute an ATP-grasp 2 domain. Arginine 707, histidine 746, leucine 748, glutamate 752, glycine 777, isoleucine 778, histidine 779, serine 780, glutamine 820, and glutamate 832 together coordinate ATP. Mg(2+) contacts are provided by glutamine 820, glutamate 832, and asparagine 834. Mn(2+) contacts are provided by glutamine 820, glutamate 832, and asparagine 834. The MGS-like domain maps to methionine 930 to serine 1060. Positions methionine 930–serine 1060 are allosteric domain.

The protein belongs to the CarB family. As to quaternary structure, composed of two chains; the small (or glutamine) chain promotes the hydrolysis of glutamine to ammonia, which is used by the large (or ammonia) chain to synthesize carbamoyl phosphate. Tetramer of heterodimers (alpha,beta)4. The cofactor is Mg(2+). Mn(2+) is required as a cofactor.

It carries out the reaction hydrogencarbonate + L-glutamine + 2 ATP + H2O = carbamoyl phosphate + L-glutamate + 2 ADP + phosphate + 2 H(+). It catalyses the reaction hydrogencarbonate + NH4(+) + 2 ATP = carbamoyl phosphate + 2 ADP + phosphate + 2 H(+). It participates in amino-acid biosynthesis; L-arginine biosynthesis; carbamoyl phosphate from bicarbonate: step 1/1. Its pathway is pyrimidine metabolism; UMP biosynthesis via de novo pathway; (S)-dihydroorotate from bicarbonate: step 1/3. Large subunit of the glutamine-dependent carbamoyl phosphate synthetase (CPSase). CPSase catalyzes the formation of carbamoyl phosphate from the ammonia moiety of glutamine, carbonate, and phosphate donated by ATP, constituting the first step of 2 biosynthetic pathways, one leading to arginine and/or urea and the other to pyrimidine nucleotides. The large subunit (synthetase) binds the substrates ammonia (free or transferred from glutamine from the small subunit), hydrogencarbonate and ATP and carries out an ATP-coupled ligase reaction, activating hydrogencarbonate by forming carboxy phosphate which reacts with ammonia to form carbamoyl phosphate. The polypeptide is Carbamoyl phosphate synthase large chain (Lacticaseibacillus paracasei (strain ATCC 334 / BCRC 17002 / CCUG 31169 / CIP 107868 / KCTC 3260 / NRRL B-441) (Lactobacillus paracasei)).